Consider the following 331-residue polypeptide: Probable transcriptional regulatory protein At2g25830 (331 aa).

The protein belongs to the TACO1 family.

This is Probable transcriptional regulatory protein At2g25830 from Arabidopsis thaliana (Mouse-ear cress).